Here is a 1061-residue protein sequence, read N- to C-terminus: Error-prone DNA polymerase (1061 aa).

This sequence belongs to the DNA polymerase type-C family. DnaE2 subfamily.

The protein localises to the cytoplasm. It catalyses the reaction DNA(n) + a 2'-deoxyribonucleoside 5'-triphosphate = DNA(n+1) + diphosphate. Functionally, DNA polymerase involved in damage-induced mutagenesis and translesion synthesis (TLS). It is not the major replicative DNA polymerase. The sequence is that of Error-prone DNA polymerase from Bdellovibrio bacteriovorus (strain ATCC 15356 / DSM 50701 / NCIMB 9529 / HD100).